The sequence spans 237 residues: Ribonuclease 3 (237 aa).

In terms of domain architecture, RNase III spans 7-135; the sequence is IKEVEAKLKF…ILGAVYLDGG (129 aa). Position 48 (Glu-48) interacts with Mg(2+). Asp-52 is a catalytic residue. Mg(2+)-binding residues include Asn-121 and Glu-124. Glu-124 is a catalytic residue. Positions 160-229 constitute a DRBM domain; sequence NPKNRLQQLT…AQEALDANDY (70 aa).

Belongs to the ribonuclease III family. In terms of assembly, homodimer. The cofactor is Mg(2+).

It is found in the cytoplasm. The enzyme catalyses Endonucleolytic cleavage to 5'-phosphomonoester.. Functionally, digests double-stranded RNA. Involved in the processing of primary rRNA transcript to yield the immediate precursors to the large and small rRNAs (23S and 16S). Processes some mRNAs, and tRNAs when they are encoded in the rRNA operon. Processes pre-crRNA and tracrRNA of type II CRISPR loci if present in the organism. The polypeptide is Ribonuclease 3 (Chlamydia felis (strain Fe/C-56) (Chlamydophila felis)).